A 328-amino-acid chain; its full sequence is Tetraacyldisaccharide 4'-kinase (328 aa).

Residue 55-62 (TAGGNGKT) participates in ATP binding.

It belongs to the LpxK family.

It catalyses the reaction a lipid A disaccharide + ATP = a lipid IVA + ADP + H(+). The protein operates within glycolipid biosynthesis; lipid IV(A) biosynthesis; lipid IV(A) from (3R)-3-hydroxytetradecanoyl-[acyl-carrier-protein] and UDP-N-acetyl-alpha-D-glucosamine: step 6/6. Functionally, transfers the gamma-phosphate of ATP to the 4'-position of a tetraacyldisaccharide 1-phosphate intermediate (termed DS-1-P) to form tetraacyldisaccharide 1,4'-bis-phosphate (lipid IVA). The sequence is that of Tetraacyldisaccharide 4'-kinase from Escherichia coli O157:H7.